Reading from the N-terminus, the 109-residue chain is Oncomodulin (109 aa).

Ser-2 bears the N-acetylserine mark. EF-hand domains follow at residues Met-39–Asp-74 and Leu-78–Ser-109. Residues Asp-52, Asp-54, Ser-56, Tyr-58, Glu-63, Asp-91, Asp-93, Asp-95, Lys-97, and Glu-102 each coordinate Ca(2+).

This sequence belongs to the parvalbumin family. Found in tumor tissues and not detected in normal tissues.

Has some calmodulin-like activity with respect to enzyme activation and growth regulation. Binds two calcium ions. This chain is Oncomodulin (Ocm), found in Rattus norvegicus (Rat).